A 201-amino-acid polypeptide reads, in one-letter code: ATP-dependent Clp protease proteolytic subunit (201 aa).

S98 (nucleophile) is an active-site residue. H123 is a catalytic residue.

It belongs to the peptidase S14 family. Fourteen ClpP subunits assemble into 2 heptameric rings which stack back to back to give a disk-like structure with a central cavity, resembling the structure of eukaryotic proteasomes.

The protein resides in the cytoplasm. The enzyme catalyses Hydrolysis of proteins to small peptides in the presence of ATP and magnesium. alpha-casein is the usual test substrate. In the absence of ATP, only oligopeptides shorter than five residues are hydrolyzed (such as succinyl-Leu-Tyr-|-NHMec, and Leu-Tyr-Leu-|-Tyr-Trp, in which cleavage of the -Tyr-|-Leu- and -Tyr-|-Trp bonds also occurs).. Cleaves peptides in various proteins in a process that requires ATP hydrolysis. Has a chymotrypsin-like activity. Plays a major role in the degradation of misfolded proteins. The polypeptide is ATP-dependent Clp protease proteolytic subunit (Rickettsia typhi (strain ATCC VR-144 / Wilmington)).